The following is a 273-amino-acid chain: Putative pyruvate, phosphate dikinase regulatory protein (273 aa).

149–156 is an ADP binding site; it reads GPSRTSKT.

This sequence belongs to the pyruvate, phosphate/water dikinase regulatory protein family. PDRP subfamily.

It catalyses the reaction N(tele)-phospho-L-histidyl/L-threonyl-[pyruvate, phosphate dikinase] + ADP = N(tele)-phospho-L-histidyl/O-phospho-L-threonyl-[pyruvate, phosphate dikinase] + AMP + H(+). The enzyme catalyses N(tele)-phospho-L-histidyl/O-phospho-L-threonyl-[pyruvate, phosphate dikinase] + phosphate + H(+) = N(tele)-phospho-L-histidyl/L-threonyl-[pyruvate, phosphate dikinase] + diphosphate. In terms of biological role, bifunctional serine/threonine kinase and phosphorylase involved in the regulation of the pyruvate, phosphate dikinase (PPDK) by catalyzing its phosphorylation/dephosphorylation. In Rickettsia typhi (strain ATCC VR-144 / Wilmington), this protein is Putative pyruvate, phosphate dikinase regulatory protein.